Consider the following 984-residue polypeptide: Rhoptry neck protein 4 (984 aa).

The signal sequence occupies residues 1 to 26 (MAIKNTLTGSGLLVLLTLACGTTVQS). Residues 24–300 (VQSSPPTPAP…TPIPASKGIY (277 aa)) form a disordered region. 2 stretches are compositionally biased toward polar residues: residues 66-85 (PQKTASQSSLAPTGDNNSKV) and 92-105 (SDTTPRSAEGTSES). An N-linked (GlcNAc...) asparagine glycan is attached at asparagine 81. A compositionally biased stretch (pro residues) spans 106-117 (PPVPQLGTPPRP). Copy 1 of the repeat occupies 129–172 (QPPTAAPRTSRSVDTGSGSDASTEQQAGGQKVVTPIPASKGIYP). The span at 135-156 (PRTSRSVDTGSGSDASTEQQAG) shows a compositional bias: polar residues. Residues 214–228 (TGRRRAKARNRKRHP) are compositionally biased toward basic residues. The span at 242-285 (QPPTTASRPSNGEGESQPPTAAPRTSRSVDTGSGSDASTEQQAG) shows a compositional bias: polar residues. Residues 258 to 301 (QPPTAAPRTSRSVDTGSGSDASTEQQAGGQKVVTPIPASKGIYP) form repeat 2. N-linked (GlcNAc...) asparagine glycosylation is found at asparagine 390 and asparagine 780. A disordered region spans residues 882-984 (GPTVSDESRR…EESTSKTSEL (103 aa)). Residues 892–901 (MIHPVRHRSR) are compositionally biased toward basic residues. Residues 902 to 914 (TAPSSEAASTAAE) are compositionally biased toward low complexity. An N-linked (GlcNAc...) asparagine glycan is attached at asparagine 925. A compositionally biased stretch (polar residues) spans 967–984 (LKQSDTLIEESTSKTSEL).

The protein resides in the secreted. It localises to the parasitophorous vacuole membrane. This chain is Rhoptry neck protein 4 (RON4), found in Toxoplasma gondii.